Here is a 678-residue protein sequence, read N- to C-terminus: MAITSVIEQMRQLIQLIAKHNHAYYVMDQPTISDSEYDHLFHQLKALEEQYPEFVQADSPTTKVGGQALSKFESVTHVVPMLSLGNVFNQEDLFAFARRVEERLPNQKVQYEVELKLDGLAISLWYENGVLVRGVTRGDGETGEDITQNVKTIRNLPKVLHSEKYEIPRLLEVRGEVLMPKSGFEKLNADQEAKGEKTFANPRNAAAGSLRQLDPNIAAARPLAFYAYGIAQCEPNHGLTTMHDSLQWLTELGFQIAERQYLCNSIQEVQQRYEQIQQERPNLQVEIDGMVVKVDDLKQQQQLGFLSREPRWATAYKFPAQAALTTVEQIDWQVGRTGTLTPVARLNPVFVGGVTVSNVTLHNIGEIHRLDVRIGDTVSVYRTGDVIPKVEKVWPEFRPAEAEVVHLPESCPVCASPVVMPEGEALARCSGGLYCAAQRIEAIRHFVSRKAMDIEGLGDRWVESLLRLDLLKDVADIYHLHEHRETLLGIEKMGEKSVQNLIDAIEASKKTTLARFIYALGIRGVGETTARMLANTFQTLEALKAANVEALKKTPDVGDITAEWIADFFLAPHNIEVLDRLIAAGIHWDAPTAPTRQPLNGESWVLTGTLEQMTRDQATQMLQALGARVSGSVSSKTKCVVAGEKAGSKLEKAAKLGIPVMNETDFLSLMAGYGQTLS.

NAD(+)-binding positions include 34 to 38 (DSEYD), 83 to 84 (SL), and Glu114. The N6-AMP-lysine intermediate role is filled by Lys116. Positions 137, 176, 293, and 317 each coordinate NAD(+). Residues Cys411, Cys414, Cys429, and Cys435 each contribute to the Zn(2+) site. Positions 594-678 (PTRQPLNGES…LMAGYGQTLS (85 aa)) constitute a BRCT domain.

The protein belongs to the NAD-dependent DNA ligase family. LigA subfamily. The cofactor is Mg(2+). Requires Mn(2+) as cofactor.

The enzyme catalyses NAD(+) + (deoxyribonucleotide)n-3'-hydroxyl + 5'-phospho-(deoxyribonucleotide)m = (deoxyribonucleotide)n+m + AMP + beta-nicotinamide D-nucleotide.. Its function is as follows. DNA ligase that catalyzes the formation of phosphodiester linkages between 5'-phosphoryl and 3'-hydroxyl groups in double-stranded DNA using NAD as a coenzyme and as the energy source for the reaction. It is essential for DNA replication and repair of damaged DNA. This chain is DNA ligase, found in Acinetobacter baumannii (strain SDF).